The chain runs to 485 residues: Chromosomal replication initiator protein DnaA (485 aa).

Residues 1–74 (MEKSKNIWSL…ILTNNGYDNV (74 aa)) are domain I, interacts with DnaA modulators. The interval 74–140 (VTIVFTNQSP…EEEPKNFKNP (67 aa)) is domain II. Residues 141 to 357 (FLKKRYTFEN…AAVTKLKAYI (217 aa)) form a domain III, AAA+ region region. G185, G187, K188, and T189 together coordinate ATP. A domain IV, binds dsDNA region spans residues 358-485 (DLDNIEIDID…TELMNKIKKN (128 aa)).

Belongs to the DnaA family. As to quaternary structure, oligomerizes as a right-handed, spiral filament on DNA at oriC.

Its subcellular location is the cytoplasm. Plays an essential role in the initiation and regulation of chromosomal replication. ATP-DnaA binds to the origin of replication (oriC) to initiate formation of the DNA replication initiation complex once per cell cycle. Binds the DnaA box (a 9 base pair repeat at the origin) and separates the double-stranded (ds)DNA. Forms a right-handed helical filament on oriC DNA; dsDNA binds to the exterior of the filament while single-stranded (ss)DNA is stabiized in the filament's interior. The ATP-DnaA-oriC complex binds and stabilizes one strand of the AT-rich DNA unwinding element (DUE), permitting loading of DNA polymerase. After initiation quickly degrades to an ADP-DnaA complex that is not apt for DNA replication. Binds acidic phospholipids. The polypeptide is Chromosomal replication initiator protein DnaA (Borreliella afzelii (strain PKo) (Borrelia afzelii)).